A 640-amino-acid chain; its full sequence is Translation factor GUF1, mitochondrial (640 aa).

The N-terminal 26 residues, 1 to 26 (MRRLRSLYLQSSICFRRFNHYSAKDT), are a transit peptide targeting the mitochondrion. In terms of domain architecture, tr-type G spans 39–223 (ENYRNFSIVA…AIIDRIPPPT (185 aa)). GTP-binding positions include 48 to 55 (AHVDHGKS), 115 to 119 (DTPGH), and 169 to 172 (NKID).

It belongs to the TRAFAC class translation factor GTPase superfamily. Classic translation factor GTPase family. LepA subfamily.

The protein resides in the mitochondrion inner membrane. It catalyses the reaction GTP + H2O = GDP + phosphate + H(+). Functionally, promotes mitochondrial protein synthesis. May act as a fidelity factor of the translation reaction, by catalyzing a one-codon backward translocation of tRNAs on improperly translocated ribosomes. Binds to mitochondrial ribosomes in a GTP-dependent manner. The protein is Translation factor GUF1, mitochondrial of Lachancea thermotolerans (strain ATCC 56472 / CBS 6340 / NRRL Y-8284) (Yeast).